The sequence spans 495 residues: Cobyric acid synthase (495 aa).

The 189-residue stretch at 252–440 (RPKVVVLAYP…VHGLFADDGL (189 aa)) folds into the GATase cobBQ-type domain. The active-site Nucleophile is the cysteine 334. Histidine 432 is an active-site residue.

This sequence belongs to the CobB/CobQ family. CobQ subfamily.

It participates in cofactor biosynthesis; adenosylcobalamin biosynthesis. Its function is as follows. Catalyzes amidations at positions B, D, E, and G on adenosylcobyrinic A,C-diamide. NH(2) groups are provided by glutamine, and one molecule of ATP is hydrogenolyzed for each amidation. This Bradyrhizobium sp. (strain ORS 278) protein is Cobyric acid synthase.